A 186-amino-acid chain; its full sequence is uncharacterized protein (186 aa).

Positions 1-18 (MKKFFFAAALVVSGLLVG) are cleaved as a signal peptide. Cys-19 carries N-palmitoyl cysteine lipidation. Cys-19 is lipidated: S-diacylglycerol cysteine.

The protein localises to the cell membrane. This is an uncharacterized protein from Salmonella typhimurium (strain LT2 / SGSC1412 / ATCC 700720).